Reading from the N-terminus, the 207-residue chain is Ribonuclease HII (207 aa).

The RNase H type-2 domain occupies 12-201 (DLVAGVDEVG…VRAAWEAREG (190 aa)). The a divalent metal cation site is built by Asp-18, Glu-19, and Asp-110.

The protein belongs to the RNase HII family. The cofactor is Mn(2+). Requires Mg(2+) as cofactor.

Its subcellular location is the cytoplasm. It carries out the reaction Endonucleolytic cleavage to 5'-phosphomonoester.. In terms of biological role, endonuclease that specifically degrades the RNA of RNA-DNA hybrids. In Pseudomonas putida (strain W619), this protein is Ribonuclease HII.